The primary structure comprises 525 residues: Ent-kaurene oxidase (525 aa).

A helical transmembrane segment spans residues 31-51; it reads VHWLIYVAFGAWLCSYVIHVL. Cys466 lines the heme pocket.

This sequence belongs to the cytochrome P450 family. Requires heme as cofactor.

It is found in the membrane. The enzyme catalyses ent-kaur-16-ene + 3 reduced [NADPH--hemoprotein reductase] + 3 O2 = ent-kaur-16-en-19-oate + 3 oxidized [NADPH--hemoprotein reductase] + 4 H2O + 4 H(+). The protein operates within plant hormone biosynthesis; gibberellin biosynthesis. Functionally, catalyzes three successive oxidations of the 4-methyl group of ent-kaurene giving kaurenoic acid, a key step in gibberellin (GA) biosynthesis. This is Ent-kaurene oxidase (CYP503A1) from Fusarium fujikuroi (Bakanae and foot rot disease fungus).